A 408-amino-acid polypeptide reads, in one-letter code: Argininosuccinate synthase (408 aa).

14–22 serves as a coordination point for ATP; the sequence is AYSGGLDTS. Positions 92 and 97 each coordinate L-citrulline. Gly-122 contacts ATP. L-aspartate-binding residues include Thr-124, Asn-128, and Asp-129. Asn-128 contacts L-citrulline. Arg-132, Ser-181, Ser-190, Glu-266, and Tyr-278 together coordinate L-citrulline.

It belongs to the argininosuccinate synthase family. Type 1 subfamily. As to quaternary structure, homotetramer.

The protein resides in the cytoplasm. The catalysed reaction is L-citrulline + L-aspartate + ATP = 2-(N(omega)-L-arginino)succinate + AMP + diphosphate + H(+). It functions in the pathway amino-acid biosynthesis; L-arginine biosynthesis; L-arginine from L-ornithine and carbamoyl phosphate: step 2/3. In Moorella thermoacetica (strain ATCC 39073 / JCM 9320), this protein is Argininosuccinate synthase.